An 82-amino-acid chain; its full sequence is Cytochrome b559 subunit alpha (82 aa).

The helical transmembrane segment at 22–36 (VIHAVTLPSIFLAGF) threads the bilayer. A heme-binding site is contributed by histidine 24.

It belongs to the PsbE/PsbF family. Heterodimer of an alpha subunit and a beta subunit. PSII is composed of 1 copy each of membrane proteins PsbA, PsbB, PsbC, PsbD, PsbE, PsbF, PsbH, PsbI, PsbJ, PsbK, PsbL, PsbM, PsbT, PsbX, PsbY, PsbZ, Psb30/Ycf12, peripheral proteins PsbO, CyanoQ (PsbQ), PsbU, PsbV and a large number of cofactors. It forms dimeric complexes. The cofactor is heme b.

It localises to the cellular thylakoid membrane. Functionally, this b-type cytochrome is tightly associated with the reaction center of photosystem II (PSII). PSII is a light-driven water:plastoquinone oxidoreductase that uses light energy to abstract electrons from H(2)O, generating O(2) and a proton gradient subsequently used for ATP formation. It consists of a core antenna complex that captures photons, and an electron transfer chain that converts photonic excitation into a charge separation. The sequence is that of Cytochrome b559 subunit alpha from Synechococcus sp. (strain CC9605).